The primary structure comprises 620 residues: MLPPQQPIHAELEHGRRTSAGSHAAQLARSPSMSLSPRSQNQSLPYPSSRPGSAAGSAHPFGYDPRQGTLSPVLSARRTSEDQPRPTSSSSASGRRYTEPASQTPAPAPLGSSAYRPRHTSTPGNPSSAYAPRFTPQPTTTPSSPSTSQHTPYTPHHSAPPRILHYNPHRQSAPSSVLRPIYPDEVAHLRQLAHANNPLRQKPAARRYSYSGGRAPEPTPTPRTSLPGENDHSYFPPQWDDRPSMPPSEVSYGGPPSSTPGAPPSGYSQYPPNWEAQTPGGNWDGERPGRLGKRRARDEEDDEYERNKRVVSGPVAGQAYSKKVTVVAEHYNSRPEVGVERREFSPIIGLKKFNNWIKSVLIGKFAYRPRGKVLDVGCGKGGDLNKWKQARIALYVGLDVADQSVQQAADRYRRMPKPGFDAFFYAHDCFSNPLSDVLSPELQIKDLYDNVTMQFCMHYAFENAAKARMMIENVSRYLRRGGIFIGTIPNAELLLERLNELPDRDEELRFGNSCYSIQFTERRHKGVYGHDYRFYLTDAVEDVPEYLVDWENFVSLASESGLRLVYKKAFHEILQEEKDSRDFGPLLGKMGVLNEYGESAMDADQWEAANLYMGFAFEKM.

Disordered stretches follow at residues 1–176 and 193–304; these read MLPP…APSS and AHAN…DDEY. A compositionally biased stretch (polar residues) spans 29-44; that stretch reads RSPSMSLSPRSQNQSL. Low complexity-rich tracts occupy residues 45 to 60 and 136 to 157; these read PYPSSRPGSAAGSAHP and PQPTTTPSSPSTSQHTPYTPHH. Positions 345 to 620 constitute an mRNA cap 0 methyltransferase domain; sequence SPIIGLKKFN…LYMGFAFEKM (276 aa). An mRNA-binding site is contributed by 354–355; that stretch reads NN. S-adenosyl-L-methionine contacts are provided by Lys358, Gly377, Asp399, Asp428, Gln454, and Tyr459.

It belongs to the class I-like SAM-binding methyltransferase superfamily. mRNA cap 0 methyltransferase family.

Its subcellular location is the nucleus. It carries out the reaction a 5'-end (5'-triphosphoguanosine)-ribonucleoside in mRNA + S-adenosyl-L-methionine = a 5'-end (N(7)-methyl 5'-triphosphoguanosine)-ribonucleoside in mRNA + S-adenosyl-L-homocysteine. Its function is as follows. Responsible for methylating the 5'-cap structure of mRNAs. The sequence is that of mRNA cap guanine-N(7) methyltransferase (ABD1) from Cryptococcus neoformans var. neoformans serotype D (strain JEC21 / ATCC MYA-565) (Filobasidiella neoformans).